Reading from the N-terminus, the 282-residue chain is 2-dehydro-3-deoxyphosphooctonate aldolase (282 aa).

This sequence belongs to the KdsA family.

It localises to the cytoplasm. It carries out the reaction D-arabinose 5-phosphate + phosphoenolpyruvate + H2O = 3-deoxy-alpha-D-manno-2-octulosonate-8-phosphate + phosphate. It participates in carbohydrate biosynthesis; 3-deoxy-D-manno-octulosonate biosynthesis; 3-deoxy-D-manno-octulosonate from D-ribulose 5-phosphate: step 2/3. Its pathway is bacterial outer membrane biogenesis; lipopolysaccharide biosynthesis. The polypeptide is 2-dehydro-3-deoxyphosphooctonate aldolase (Agrobacterium fabrum (strain C58 / ATCC 33970) (Agrobacterium tumefaciens (strain C58))).